A 267-amino-acid chain; its full sequence is Diphthine--ammonia ligase (267 aa).

Tyrosine 97 bears the Phosphotyrosine mark.

Belongs to the Diphthine--ammonia ligase family.

The enzyme catalyses diphthine-[translation elongation factor 2] + NH4(+) + ATP = diphthamide-[translation elongation factor 2] + AMP + diphosphate + H(+). It participates in protein modification; peptidyl-diphthamide biosynthesis. Functionally, amidase that catalyzes the last step of diphthamide biosynthesis using ammonium and ATP. Diphthamide biosynthesis consists in the conversion of an L-histidine residue in the translation elongation factor eEF-2 (EEF2) to diphthamide. This is Diphthine--ammonia ligase (DPH6) from Bos taurus (Bovine).